A 306-amino-acid polypeptide reads, in one-letter code: tRNA dimethylallyltransferase (306 aa).

9-16 (GPTAIGKT) lines the ATP pocket. 11-16 (TAIGKT) is a substrate binding site. Residues 34–37 (DSMQ) form an interaction with substrate tRNA region.

It belongs to the IPP transferase family. Monomer. Requires Mg(2+) as cofactor.

It carries out the reaction adenosine(37) in tRNA + dimethylallyl diphosphate = N(6)-dimethylallyladenosine(37) in tRNA + diphosphate. Catalyzes the transfer of a dimethylallyl group onto the adenine at position 37 in tRNAs that read codons beginning with uridine, leading to the formation of N6-(dimethylallyl)adenosine (i(6)A). This is tRNA dimethylallyltransferase from Lactobacillus helveticus (strain DPC 4571).